Consider the following 288-residue polypeptide: MKKIKKAIIPAAGLGTRFLPATKAMPKEMLPILDKPTIQYIIEEAARAGIEDIIIVTGRHKRAIEDHFDSQKELEMVLKEKGKSELLEKVQYSTELANIFYVRQKEQKGLGHAISSARQFIGNEPFAVLLGDDIVESEVPAVKQLIDVYEETGHSVIGVQEVPEADTHRYGIIDPLTKNGRQYEVKKFVEKPAQGTAPSNLAIMGRYVLTPEIFDYLKTQKEGAGNEIQLTDAIERMNNDNQVYAYDFEGERYDVGEKLGFVKTTIEYALKDDSMREELTRFIKELGL.

Belongs to the UDPGP type 2 family.

It carries out the reaction alpha-D-glucose 1-phosphate + UTP + H(+) = UDP-alpha-D-glucose + diphosphate. The protein operates within glycolipid metabolism; diglucosyl-diacylglycerol biosynthesis. Catalyzes the formation of UDP-glucose from glucose-1-phosphate and UTP. This is an intermediate step in the biosynthesis of diglucosyl-diacylglycerol (Glc2-DAG), i.e. the predominant glycolipid found in the S.aureus membrane, which is also used as a membrane anchor for lipoteichoic acid (LTA). In Staphylococcus aureus (strain MRSA252), this protein is UTP--glucose-1-phosphate uridylyltransferase (gtaB).